Reading from the N-terminus, the 407-residue chain is tRNA(Ile)-lysidine synthase (407 aa).

36 to 41 contacts ATP; sequence SGGRDS.

This sequence belongs to the tRNA(Ile)-lysidine synthase family.

It is found in the cytoplasm. It catalyses the reaction cytidine(34) in tRNA(Ile2) + L-lysine + ATP = lysidine(34) in tRNA(Ile2) + AMP + diphosphate + H(+). Functionally, ligates lysine onto the cytidine present at position 34 of the AUA codon-specific tRNA(Ile) that contains the anticodon CAU, in an ATP-dependent manner. Cytidine is converted to lysidine, thus changing the amino acid specificity of the tRNA from methionine to isoleucine. The chain is tRNA(Ile)-lysidine synthase from Tropheryma whipplei (strain TW08/27) (Whipple's bacillus).